We begin with the raw amino-acid sequence, 338 residues long: P2Y purinoceptor 14 (338 aa).

Over 1-29 the chain is Extracellular; it reads MINSTSTQPPDESCSQNLLITQQIIPVLY. An N-linked (GlcNAc...) asparagine glycan is attached at Asn3. Residues 30–50 form a helical membrane-spanning segment; sequence CMVFIAGILLNGVSGWIFFYV. Over 51–55 the chain is Cytoplasmic; it reads PSSKS. The helical transmembrane segment at 56–76 threads the bilayer; it reads FIIYLKNIVIADFVMSLTFPF. Residues 77-96 lie on the Extracellular side of the membrane; that stretch reads KILGDSGLGPWQLNVFVCRV. Cysteines 94 and 172 form a disulfide. The chain crosses the membrane as a helical span at residues 97-117; that stretch reads SAVLFYVNMYVSIVFFGLISF. Over 118–139 the chain is Cytoplasmic; that stretch reads DRYYKIVKPLWTSFIQSVSYSK. Residues 140 to 160 form a helical membrane-spanning segment; it reads LLSVIVWMLMLLLAVPNIILT. Asn161 is a glycosylation site (N-linked (GlcNAc...) asparagine). Residues 161–188 lie on the Extracellular side of the membrane; sequence NQSVREVTQIKCIELKSELGRKWHKASN. A helical transmembrane segment spans residues 189-209; it reads YIFVAIFWIVFLLLIVFYTAI. Residues 210 to 234 are Cytoplasmic-facing; the sequence is TKKIFKSHLKSSRNSTSVKKKSSRN. Residues 235 to 255 form a helical membrane-spanning segment; that stretch reads IFSIVFVFFVCFVPYHIARIP. The Extracellular portion of the chain corresponds to 256–278; it reads YTKSQTEAHYSCQSKEILRYMKE. Residues 279-299 form a helical membrane-spanning segment; the sequence is FTLLLSAANVCLDPIIYFFLC. Topologically, residues 300–338 are cytoplasmic; it reads QPFREILCKKLHIPLKAQNDLDISRIKRGNTTLESTDTL.

It belongs to the G-protein coupled receptor 1 family. Highest expression in the placenta, adipose tissue, stomach and intestine, intermediate levels in the brain, spleen, lung and heart, lowest levels in the kidney.

It localises to the cell membrane. Its function is as follows. Receptor for UDP-glucose and other UDP-sugar coupled to G-proteins. Not activated by ATP, ADP, UTP or ATP. The polypeptide is P2Y purinoceptor 14 (P2RY14) (Homo sapiens (Human)).